Here is a 141-residue protein sequence, read N- to C-terminus: Putative pre-16S rRNA nuclease (141 aa).

Belongs to the YqgF nuclease family.

It is found in the cytoplasm. Its function is as follows. Could be a nuclease involved in processing of the 5'-end of pre-16S rRNA. The protein is Putative pre-16S rRNA nuclease of Aliivibrio fischeri (strain MJ11) (Vibrio fischeri).